A 206-amino-acid polypeptide reads, in one-letter code: MSRTLVLVRHGQSEWNLKNLFTGWRDPGLTEQGHAEAKAAGQRLKAAGLKFDIAYTSALSRAQVTCQHILDELGQPGLETIRDQALNERDYGDLSGLNKDDARAKWGEEQVHIWRRSYDVPPPGGESLKDTGARVWPYYLHTIQPHVLREETVLVAAHGNSLRTLIMALDGLTPEQILKQELNTGVPIIYRLNADSTVASKEILSA.

Residues 9-16, 22-23, R61, 88-91, K99, 115-116, and 159-160 each bind substrate; these read RHGQSEWN, TG, ERDY, RR, and GN. The active-site Tele-phosphohistidine intermediate is the H10. E88 (proton donor/acceptor) is an active-site residue.

The protein belongs to the phosphoglycerate mutase family. BPG-dependent PGAM subfamily. In terms of assembly, homodimer.

The enzyme catalyses (2R)-2-phosphoglycerate = (2R)-3-phosphoglycerate. It participates in carbohydrate degradation; glycolysis; pyruvate from D-glyceraldehyde 3-phosphate: step 3/5. Its function is as follows. Catalyzes the interconversion of 2-phosphoglycerate and 3-phosphoglycerate. The sequence is that of 2,3-bisphosphoglycerate-dependent phosphoglycerate mutase from Brucella ovis (strain ATCC 25840 / 63/290 / NCTC 10512).